The following is a 196-amino-acid chain: uncharacterized protein (196 aa).

The protein belongs to the flavoredoxin family. It depends on FMN as a cofactor.

This is an uncharacterized protein from Aquifex aeolicus (strain VF5).